The sequence spans 239 residues: Calcium-activated potassium channel subunit beta-3 (239 aa).

Residues 1-51 (MQPFSIPVQITLQGGRRRQGRTALPASGISNGDPLKVHPKLPSSAGEDRAT) are Cytoplasmic-facing. Positions 15-38 (GRRRQGRTALPASGISNGDPLKVH) are disordered. Residues 52-72 (LLGIAMMASSVLMFFLLGTTV) traverse the membrane as a helical segment. Residues 73 to 197 (LKPFMLSSPR…GVVLRKSGHK (125 aa)) lie on the Extracellular side of the membrane. N-linked (GlcNAc...) asparagine glycans are attached at residues N86, N123, and N174. The helical transmembrane segment at 198–218 (VVFHCLFWPLLTLLGGALIVG) threads the bilayer. The Cytoplasmic segment spans residues 219–239 (LVRLTQHLSFQCEKYRAVVRA).

It belongs to the KCNMB (TC 8.A.14.1) family. KCNMB3 subfamily. As to quaternary structure, interacts with KCNMA1 tetramer. There are probably 4 molecules of KCMNB3 per KCNMA1 tetramer. In terms of processing, N-glycosylated. Post-translationally, the extracellular domain contains disulfide bond essential for the gating mechanism.

The protein localises to the membrane. In terms of biological role, regulatory subunit of the calcium activated potassium KCNMA1 (maxiK) channel. Modulates the calcium sensitivity and gating kinetics of KCNMA1, thereby contributing to KCNMA1 channel diversity. Alters the functional properties of the current expressed by the KCNMA1 channel. May partially inactivate the current of KCNBMA. Two or more subunits of KCNMB3 are required to block the KCNMA1 tetramer. In Rattus norvegicus (Rat), this protein is Calcium-activated potassium channel subunit beta-3.